We begin with the raw amino-acid sequence, 324 residues long: Ribosomal RNA small subunit methyltransferase H (324 aa).

Residues 35–37 (GGH), Asp55, Phe85, Asp103, and Gln110 contribute to the S-adenosyl-L-methionine site.

It belongs to the methyltransferase superfamily. RsmH family.

It is found in the cytoplasm. The enzyme catalyses cytidine(1402) in 16S rRNA + S-adenosyl-L-methionine = N(4)-methylcytidine(1402) in 16S rRNA + S-adenosyl-L-homocysteine + H(+). Specifically methylates the N4 position of cytidine in position 1402 (C1402) of 16S rRNA. This Solidesulfovibrio magneticus (strain ATCC 700980 / DSM 13731 / RS-1) (Desulfovibrio magneticus) protein is Ribosomal RNA small subunit methyltransferase H.